The primary structure comprises 257 residues: Thiazole synthase (257 aa).

Lys-95 (schiff-base intermediate with DXP) is an active-site residue. Residues Gly-156, 182–183 (AG), and 204–205 (NT) each bind 1-deoxy-D-xylulose 5-phosphate.

The protein belongs to the ThiG family. In terms of assembly, homotetramer. Forms heterodimers with either ThiH or ThiS.

The protein localises to the cytoplasm. The catalysed reaction is [ThiS sulfur-carrier protein]-C-terminal-Gly-aminoethanethioate + 2-iminoacetate + 1-deoxy-D-xylulose 5-phosphate = [ThiS sulfur-carrier protein]-C-terminal Gly-Gly + 2-[(2R,5Z)-2-carboxy-4-methylthiazol-5(2H)-ylidene]ethyl phosphate + 2 H2O + H(+). The protein operates within cofactor biosynthesis; thiamine diphosphate biosynthesis. In terms of biological role, catalyzes the rearrangement of 1-deoxy-D-xylulose 5-phosphate (DXP) to produce the thiazole phosphate moiety of thiamine. Sulfur is provided by the thiocarboxylate moiety of the carrier protein ThiS. In vitro, sulfur can be provided by H(2)S. This chain is Thiazole synthase, found in Vibrio vulnificus (strain CMCP6).